A 116-amino-acid chain; its full sequence is MIGIDIVQIERIEQLIEKYGQKGLERFLLPQEMEVAKKPQTVAGFWAAKEAVAKALKTGIGKELGFHDIFIYKTEKGAPEFKLLNGKEQMFRIQQTALSISHDAGVAVAVAVIIRC.

Mg(2+) contacts are provided by aspartate 5 and glutamate 50.

This sequence belongs to the P-Pant transferase superfamily. AcpS family. Mg(2+) is required as a cofactor.

The protein localises to the cytoplasm. It catalyses the reaction apo-[ACP] + CoA = holo-[ACP] + adenosine 3',5'-bisphosphate + H(+). Its function is as follows. Transfers the 4'-phosphopantetheine moiety from coenzyme A to a Ser of acyl-carrier-protein. The protein is Holo-[acyl-carrier-protein] synthase of Nitratiruptor sp. (strain SB155-2).